The sequence spans 364 residues: Medium-wave-sensitive opsin 2 (364 aa).

A disordered region spans residues 1–23; the sequence is MAQQWSLQRLAGRHPQDSYEDST. Over 1–52 the chain is Extracellular; the sequence is MAQQWSLQRLAGRHPQDSYEDSTQSSIFTYTNSNSTRGPFEGPNYHIAPRWV. Residues 17-43 are required for 11-cis-retinal regeneration; sequence DSYEDSTQSSIFTYTNSNSTRGPFEGP. The N-linked (GlcNAc...) asparagine glycan is linked to Asn-34. Residues 53-77 form a helical membrane-spanning segment; the sequence is YHLTSVWMIFVVIASVFTNGLVLAA. Residues 78–89 are Cytoplasmic-facing; the sequence is TMKFKKLRHPLN. Residues 90–115 traverse the membrane as a helical segment; the sequence is WILVNLAVADLAETVIASTISVVNQV. Topologically, residues 116 to 129 are extracellular; that stretch reads YGYFVLGHPMCVLE. Cys-126 and Cys-203 are joined by a disulfide. A helical transmembrane segment spans residues 130–149; sequence GYTVSLCGITGLWSLAIISW. At 150–168 the chain is on the cytoplasmic side; sequence ERWMVVCKPFGNVRFDAKL. The helical transmembrane segment at 169–192 threads the bilayer; that stretch reads AIVGIAFSWIWAAVWTAPPIFGWS. Residues 193–218 are Extracellular-facing; that stretch reads RYWPHGLKTSCGPDVFSGSSYPGVQS. The chain crosses the membrane as a helical span at residues 219–246; sequence YMIVLMVTCCITPLSIIVLCYLQVWLAI. At 247-268 the chain is on the cytoplasmic side; that stretch reads RAVAKQQKESESTQKAEKEVTR. The chain crosses the membrane as a helical span at residues 269 to 292; that stretch reads MVVVMVLAFCFCWGPYAFFACFAA. The Extracellular segment spans residues 293-300; sequence ANPGYPFH. A helical membrane pass occupies residues 301-325; it reads PLMAALPAFFAKSATIYNPVIYVFM. Lys-312 bears the N6-(retinylidene)lysine mark. Residues 326 to 364 are Cytoplasmic-facing; it reads NRQFRNCILQLFGKKVDDGSELSSASKTEVSSVSSVSPA.

This sequence belongs to the G-protein coupled receptor 1 family. Opsin subfamily. N-glycosylated. O-glycosylated. In terms of processing, phosphorylated on some or all of the serine and threonine residues present in the C-terminal region.

The protein localises to the cell membrane. Its function is as follows. Visual pigments are the light-absorbing molecules that mediate vision. They consist of an apoprotein, opsin, covalently linked to cis-retinal. This is Medium-wave-sensitive opsin 2 from Homo sapiens (Human).